Consider the following 240-residue polypeptide: Tetrahydromethanopterin S-methyltransferase subunit A (240 aa).

At 1-216 the chain is on the cytoplasmic side; that stretch reads MADKKAPASG…DAALIAKFNS (216 aa). Histidine 85 serves as a coordination point for 5-hydroxybenzimidazolylcob(I)amide. The helical transmembrane segment at 217 to 234 threads the bilayer; the sequence is GYYNGKIQGIAIGLFLSL. Over 235–240 the chain is Extracellular; that stretch reads LIFSLL.

The protein belongs to the MtrA family. As to quaternary structure, the complex is composed of 8 subunits; MtrA, MtrB, MtrC, MtrD, MtrE, MtrF, MtrG and MtrH. 5-hydroxybenzimidazolylcob(I)amide serves as cofactor.

Its subcellular location is the cell membrane. The enzyme catalyses 5-methyl-5,6,7,8-tetrahydromethanopterin + coenzyme M + 2 Na(+)(in) = 5,6,7,8-tetrahydromethanopterin + methyl-coenzyme M + 2 Na(+)(out). It participates in one-carbon metabolism; methanogenesis from CO(2); methyl-coenzyme M from 5,10-methylene-5,6,7,8-tetrahydromethanopterin: step 2/2. In terms of biological role, part of a complex that catalyzes the formation of methyl-coenzyme M and tetrahydromethanopterin from coenzyme M and methyl-tetrahydromethanopterin. This is an energy-conserving, sodium-ion translocating step. This is Tetrahydromethanopterin S-methyltransferase subunit A from Methanococcus aeolicus (strain ATCC BAA-1280 / DSM 17508 / OCM 812 / Nankai-3).